Reading from the N-terminus, the 81-residue chain is Omega-conotoxin-like 3 (81 aa).

Positions 1-22 (MKLTCMMIVAVLFLTASIFITA) are cleaved as a signal peptide. Positions 23 to 51 (DNSRNGIENLPRMRRHEMKKPKASKLNKR) are excised as a propeptide. Intrachain disulfides connect cysteine 53–cysteine 71, cysteine 60–cysteine 75, and cysteine 70–cysteine 79.

Belongs to the conotoxin O1 superfamily. As to expression, expressed by the venom duct.

The protein localises to the secreted. Omega-conotoxins act at presynaptic membranes, they bind and block voltage-gated calcium channels (Cav). This is Omega-conotoxin-like 3 from Conus imperialis (Imperial cone).